Consider the following 408-residue polypeptide: UV excision repair protein RAD23 homolog B (408 aa).

The Ubiquitin-like domain occupies 1–79 (MLVTLKTLQQ…VVVMVTKPKA (79 aa)). Residues 80–111 (VTTPAPATTQQSNSAATTTVSSSTAPAVTQAP) are compositionally biased toward low complexity. The interval 80 to 176 (VTTPAPATTQ…TSGDSSRSNL (97 aa)) is disordered. A compositionally biased stretch (pro residues) spans 112–122 (APAPASAPTPT). The segment covering 123-143 (PVSVTPAPTTASSEPAPASAA) has biased composition (low complexity). Over residues 144-153 (KQEKPAERPV) the composition is skewed to basic and acidic residues. Over residues 154 to 174 (ETPVATTPTSTDSTSGDSSRS) the composition is skewed to low complexity. A phosphothreonine mark is found at T155 and T164. At S174 the chain carries Phosphoserine. Residue T186 is modified to Phosphothreonine. The UBA 1 domain occupies 188-228 (QSYENMVTEIMSMGYEREQVIAALRASFNNPDRAVEYLLMG). S199 is subject to Phosphoserine. Y202 carries the post-translational modification Phosphotyrosine. The segment at 236-274 (QAVVDPPPAASTGAPQSSVAAAAATTTATTTTTSSGGHP) is disordered. A compositionally biased stretch (low complexity) spans 255–268 (AAAAATTTATTTTT). An STI1 domain is found at 273–316 (HPLEFLRNQPQFQQMRQIIQQNPSLLPALLQQIGRENPQLLQQI). One can recognise a UBA 2 domain in the interval 363–403 (PQEKEAIERLKALGFPEGLVIQAYFACEKNENLAANFLLQQ).

It belongs to the RAD23 family. Component of the XPC complex composed of XPC, RAD23B and CETN2. Interacts with NGLY1 and PSMC1. Interacts with ATXN3. Interacts with PSMD4 and PSMC5. Interacts with AMFR. Interacts with VCP; the interaction is indirect and mediated by NGLY1.

It localises to the nucleus. It is found in the cytoplasm. Functionally, multiubiquitin chain receptor involved in modulation of proteasomal degradation. Binds to polyubiquitin chains. Proposed to be capable to bind simultaneously to the 26S proteasome and to polyubiquitinated substrates and to deliver ubiquitinated proteins to the proteasome. May play a role in endoplasmic reticulum-associated degradation (ERAD) of misfolded glycoproteins by association with PNGase and delivering deglycosylated proteins to the proteasome. Involved in global genome nucleotide excision repair (GG-NER) by acting as component of the XPC complex. Cooperatively with CETN2 appears to stabilize XPC. May protect XPC from proteasomal degradation. In terms of biological role, the XPC complex is proposed to represent the first factor bound at the sites of DNA damage and together with other core recognition factors, XPA, RPA and the TFIIH complex, is part of the pre-incision (or initial recognition) complex. The XPC complex recognizes a wide spectrum of damaged DNA characterized by distortions of the DNA helix such as single-stranded loops, mismatched bubbles or single-stranded overhangs. The orientation of XPC complex binding appears to be crucial for inducing a productive NER. XPC complex is proposed to recognize and to interact with unpaired bases on the undamaged DNA strand which is followed by recruitment of the TFIIH complex and subsequent scanning for lesions in the opposite strand in a 5'-to-3' direction by the NER machinery. Cyclobutane pyrimidine dimers (CPDs) which are formed upon UV-induced DNA damage esacpe detection by the XPC complex due to a low degree of structural perurbation. Instead they are detected by the UV-DDB complex which in turn recruits and cooperates with the XPC complex in the respective DNA repair. In vitro, the XPC:RAD23B dimer is sufficient to initiate NER; it preferentially binds to cisplatin and UV-damaged double-stranded DNA and also binds to a variety of chemically and structurally diverse DNA adducts. XPC:RAD23B contacts DNA both 5' and 3' of a cisplatin lesion with a preference for the 5' side. XPC:RAD23B induces a bend in DNA upon binding. XPC:RAD23B stimulates the activity of DNA glycosylases TDG and SMUG1. The polypeptide is UV excision repair protein RAD23 homolog B (RAD23B) (Bos taurus (Bovine)).